The following is a 617-amino-acid chain: Type VII secretion systems protein EssD (617 aa).

The interval 420-448 is disordered; that stretch reads QNHVTHGPKDSMVRSEGKHSISSHEMNSS. The span at 426–438 shows a compositional bias: basic and acidic residues; that stretch reads GPKDSMVRSEGKH.

This sequence belongs to the EssD family. In terms of assembly, interacts (via C-terminal) with EssG; this interaction blocks EssD activity. Interacts with EssE.

The protein resides in the secreted. It is found in the cell membrane. Functionally, component of the type VII secretion system (Ess). Plays a role in Ess secretion during infection. Required for the efficient secretion of EsxA. Required for abscess formation and staphylococcal persistence in host tissue. Possesses a toxic DNase activity that is modulated by EssG by forming a nuclease toxin-antitoxin pair. This nuclease toxin targets competitor bacteria. The sequence is that of Type VII secretion systems protein EssD from Staphylococcus aureus (strain Newman).